A 333-amino-acid polypeptide reads, in one-letter code: Protoheme IX farnesyltransferase (333 aa).

Transmembrane regions (helical) follow at residues Leu64–Leu84, Thr110–Val130, Leu133–Leu153, Ile161–Gly181, Trp189–Leu209, Ile246–Phe266, and Ala287–Ile307.

The protein belongs to the UbiA prenyltransferase family. Protoheme IX farnesyltransferase subfamily.

The protein resides in the cell inner membrane. It carries out the reaction heme b + (2E,6E)-farnesyl diphosphate + H2O = Fe(II)-heme o + diphosphate. It participates in porphyrin-containing compound metabolism; heme O biosynthesis; heme O from protoheme: step 1/1. Its function is as follows. Converts heme B (protoheme IX) to heme O by substitution of the vinyl group on carbon 2 of heme B porphyrin ring with a hydroxyethyl farnesyl side group. The chain is Protoheme IX farnesyltransferase from Prochlorococcus marinus (strain MIT 9312).